A 145-amino-acid chain; its full sequence is Transcription elongation factor 1 (145 aa).

Zn(2+) is bound by residues Cys-25, Cys-28, Cys-49, and Cys-52. Ser-55 carries the phosphoserine modification. The disordered stretch occupies residues 80 to 145; sequence VNSGRGSDTD…RGALVDSDDE (66 aa). Acidic residues-rich tracts occupy residues 88–104 and 113–126; these read TDDG…SDSE and GEID…DSDE. Phosphoserine occurs at positions 117, 124, and 142.

Belongs to the ELOF1 family.

Its subcellular location is the nucleus. Its function is as follows. Transcription elongation factor implicated in the maintenance of proper chromatin structure in actively transcribed regions. The protein is Transcription elongation factor 1 (ELF1) of Saccharomyces cerevisiae (strain ATCC 204508 / S288c) (Baker's yeast).